A 103-amino-acid polypeptide reads, in one-letter code: Growth-regulated alpha protein (103 aa).

Residues 1-30 form the signal peptide; sequence MARAANPAPRLLGAAMLLLLLVAAGRRAAG. Intrachain disulfides connect C39–C65 and C41–C81.

It belongs to the intercrine alpha (chemokine CxC) family.

The protein resides in the secreted. Has chemotactic activity for neutrophils. This chain is Growth-regulated alpha protein (CXCL1), found in Ovis aries (Sheep).